The chain runs to 123 residues: Small ribosomal subunit protein uS12 (123 aa).

The segment at 1–21 is disordered; it reads MPTIEQLVRKGRQAKPKKSKT. The span at 9–20 shows a compositional bias: basic residues; the sequence is RKGRQAKPKKSK. Asp89 is subject to 3-methylthioaspartic acid.

It belongs to the universal ribosomal protein uS12 family. As to quaternary structure, part of the 30S ribosomal subunit. Contacts proteins S8 and S17. May interact with IF1 in the 30S initiation complex.

Functionally, with S4 and S5 plays an important role in translational accuracy. Interacts with and stabilizes bases of the 16S rRNA that are involved in tRNA selection in the A site and with the mRNA backbone. Located at the interface of the 30S and 50S subunits, it traverses the body of the 30S subunit contacting proteins on the other side and probably holding the rRNA structure together. The combined cluster of proteins S8, S12 and S17 appears to hold together the shoulder and platform of the 30S subunit. The chain is Small ribosomal subunit protein uS12 from Bifidobacterium adolescentis (strain ATCC 15703 / DSM 20083 / NCTC 11814 / E194a).